Reading from the N-terminus, the 155-residue chain is uncharacterized protein (155 aa).

An HTH asnC-type domain is found at 4-65; that stretch reads IDEIDEIIVR…VVDTSFFGEF (62 aa). A DNA-binding region (H-T-H motif) is located at residues 23–42; the sequence is LTELGKKVGLTASAVKNRIE.

This is an uncharacterized protein from Pyrococcus abyssi (strain GE5 / Orsay).